We begin with the raw amino-acid sequence, 1026 residues long: Exportin-T (1026 aa).

The protein belongs to the exportin family.

Its subcellular location is the nucleus. The protein resides in the cytoplasm. Its function is as follows. tRNA nucleus export receptor which facilitates tRNA translocation across the nuclear pore complex. Involved in pre-tRNA splicing, probably by affecting the interaction of pre-tRNA with splicing endonuclease. In Neurospora crassa (strain ATCC 24698 / 74-OR23-1A / CBS 708.71 / DSM 1257 / FGSC 987), this protein is Exportin-T (los1).